Consider the following 329-residue polypeptide: BRISC and BRCA1-A complex member 1 (329 aa).

Position 1 is an N-acetylmethionine (Met1). Residues 1–84 (MEVAEPSSPT…VPPPAPEVQI (84 aa)) are disordered. The residue at position 8 (Ser8) is a Phosphoserine. The span at 10–19 (TEEEEEEEEH) shows a compositional bias: acidic residues. Phosphoserine occurs at positions 29, 49, 57, and 62. Thr65 is modified (phosphothreonine). Position 66 is a phosphoserine (Ser66). Residues 95-298 (VIICLDLSEE…LELHNCMAKL (204 aa)) form a VWFA-like region.

The protein belongs to the BABAM1 family. As to quaternary structure, component of the ARISC complex, at least composed of UIMC1/RAP80, ABRAXAS1, BRCC3/BRCC36, BABAM2 and BABAM1/NBA1. Component of the BRCA1-A complex, at least composed of BRCA1, BARD1, UIMC1/RAP80, ABRAXAS1, BRCC3/BRCC36, BABAM2 and BABAM1/NBA1. In the BRCA1-A complex, interacts directly with ABRAXAS1 and BABAM2. Component of the BRISC complex, at least composed of ABRAXAS2, BRCC3/BRCC36, BABAM2 and BABAM1/NBA1. Identified in a complex with SHMT2 and the other subunits of the BRISC complex.

Its subcellular location is the cytoplasm. It localises to the nucleus. Component of the BRCA1-A complex, a complex that specifically recognizes 'Lys-63'-linked ubiquitinated histones H2A and H2AX at DNA lesions sites, leading to target the BRCA1-BARD1 heterodimer to sites of DNA damage at double-strand breaks (DSBs). The BRCA1-A complex also possesses deubiquitinase activity that specifically removes 'Lys-63'-linked ubiquitin on histones H2A and H2AX. In the BRCA1-A complex, it is required for the complex integrity and its localization at DSBs. Component of the BRISC complex, a multiprotein complex that specifically cleaves 'Lys-63'-linked ubiquitin in various substrates. In these 2 complexes, it is probably required to maintain the stability of BABAM2 and help the 'Lys-63'-linked deubiquitinase activity mediated by BRCC3/BRCC36 component. The BRISC complex is required for normal mitotic spindle assembly and microtubule attachment to kinetochores via its role in deubiquitinating NUMA1. Plays a role in interferon signaling via its role in the deubiquitination of the interferon receptor IFNAR1; deubiquitination increases IFNAR1 activity by enhancing its stability and cell surface expression. Down-regulates the response to bacterial lipopolysaccharide (LPS) via its role in IFNAR1 deubiquitination. This chain is BRISC and BRCA1-A complex member 1 (BABAM1), found in Homo sapiens (Human).